Consider the following 297-residue polypeptide: Endonuclease G, mitochondrial (297 aa).

The transit peptide at methionine 1–alanine 48 directs the protein to the mitochondrion. Residue threonine 128 is modified to Phosphothreonine; by GSK3-beta. Histidine 141 functions as the Proton acceptor in the catalytic mechanism. Asparagine 172 serves as a coordination point for Mg(2+). An essential for deoxyribonuclease activity region spans residues alanine 286–serine 296. Position 288 is a phosphoserine; by GSK3-beta (serine 288).

It belongs to the DNA/RNA non-specific endonuclease family. Homodimer; disulfide-linked. Homodimerization is essential for enzyme activity. Interacts with YWHAG. Requires Mg(2+) as cofactor. GSK3-beta-mediated dual phosphorylations at Thr-128 and Ser-288 is necessary for its interaction with YWHAG and the induction of autophagy.

Its subcellular location is the mitochondrion. Endonuclease that preferentially catalyzes the cleavage of double-stranded 5-hydroxymethylcytosine (5hmC)-modified DNA. The 5hmC-modified nucleotide does not increase the binding affinity, but instead increases the efficiency of cutting and specifies the site of cleavage for the modified DNAs. Shows significantly higher affinity for four-stranded Holliday junction over duplex and single-stranded DNAs. Promotes conservative recombination when the DNA is 5hmC-modified. Promotes autophagy through the suppression of mTOR by its phosphorylation-mediated interaction with YWHAG and its endonuclease activity-mediated DNA damage response. GSK3-beta mediated phosphorylation of ENDOG enhances its interaction with YWHAG, leading to the release of TSC2 and PIK3C3 from YWHAG resulting in mTOR pathway suppression and autophagy initiation. Promotes cleavage of mtDNA in response to oxidative and nitrosative stress, in turn inducing compensatory mtDNA replication. The sequence is that of Endonuclease G, mitochondrial (ENDOG) from Homo sapiens (Human).